The primary structure comprises 534 residues: CTP synthase (534 aa).

The amidoligase domain stretch occupies residues 1–265; sequence MKYIVVTGGV…TTRLMKHLKL (265 aa). Ser12 provides a ligand contact to CTP. Residue Ser12 coordinates UTP. 13–18 is an ATP binding site; the sequence is GLGKGI. L-glutamine is bound at residue Tyr53. Residue Asp70 coordinates ATP. Mg(2+)-binding residues include Asp70 and Glu140. CTP is bound by residues 147-149, 186-191, and Lys222; these read DIE and KTKPSQ. UTP is bound by residues 186–191 and Lys222; that span reads KTKPSQ. A Glutamine amidotransferase type-1 domain is found at 289–530; the sequence is KLAIVGKYTN…VRAMCKYNKE (242 aa). Gly352 lines the L-glutamine pocket. Cys379 serves as the catalytic Nucleophile; for glutamine hydrolysis. L-glutamine-binding positions include 380-383, Glu403, and Arg460; that span reads LGMQ. Residues His503 and Glu505 contribute to the active site.

Belongs to the CTP synthase family. Homotetramer.

It carries out the reaction UTP + L-glutamine + ATP + H2O = CTP + L-glutamate + ADP + phosphate + 2 H(+). The catalysed reaction is L-glutamine + H2O = L-glutamate + NH4(+). The enzyme catalyses UTP + NH4(+) + ATP = CTP + ADP + phosphate + 2 H(+). The protein operates within pyrimidine metabolism; CTP biosynthesis via de novo pathway; CTP from UDP: step 2/2. Allosterically activated by GTP, when glutamine is the substrate; GTP has no effect on the reaction when ammonia is the substrate. The allosteric effector GTP functions by stabilizing the protein conformation that binds the tetrahedral intermediate(s) formed during glutamine hydrolysis. Inhibited by the product CTP, via allosteric rather than competitive inhibition. Its function is as follows. Catalyzes the ATP-dependent amination of UTP to CTP with either L-glutamine or ammonia as the source of nitrogen. Regulates intracellular CTP levels through interactions with the four ribonucleotide triphosphates. In Methanosarcina acetivorans (strain ATCC 35395 / DSM 2834 / JCM 12185 / C2A), this protein is CTP synthase.